A 454-amino-acid polypeptide reads, in one-letter code: Histidine--tRNA ligase (454 aa).

It belongs to the class-II aminoacyl-tRNA synthetase family. Homodimer.

The protein resides in the cytoplasm. It catalyses the reaction tRNA(His) + L-histidine + ATP = L-histidyl-tRNA(His) + AMP + diphosphate + H(+). The polypeptide is Histidine--tRNA ligase (Bacteroides fragilis (strain YCH46)).